We begin with the raw amino-acid sequence, 151 residues long: Acidic phospholipase A2 4 (151 aa).

The signal sequence occupies residues 1-27 (MYPAHLLVLLAVCVSLLGAASIPARPL). Intrachain disulfides connect Cys-38/Cys-104, Cys-54/Cys-151, Cys-56/Cys-72, Cys-71/Cys-132, Cys-78/Cys-125, Cys-88/Cys-118, and Cys-111/Cys-123. Residues Tyr-55, Gly-57, and Gly-59 each coordinate Ca(2+). Residue His-75 is part of the active site. A Ca(2+)-binding site is contributed by Asp-76. Residue Asp-126 is part of the active site.

Belongs to the phospholipase A2 family. Group I subfamily. D49 sub-subfamily. Ca(2+) is required as a cofactor. In terms of tissue distribution, expressed by the venom gland.

It is found in the secreted. It carries out the reaction a 1,2-diacyl-sn-glycero-3-phosphocholine + H2O = a 1-acyl-sn-glycero-3-phosphocholine + a fatty acid + H(+). PLA2 catalyzes the calcium-dependent hydrolysis of the 2-acyl groups in 3-sn-phosphoglycerides. The polypeptide is Acidic phospholipase A2 4 (Tropidechis carinatus (Australian rough-scaled snake)).